Reading from the N-terminus, the 281-residue chain is 2-dehydro-3-deoxyphosphooctonate aldolase (281 aa).

This sequence belongs to the KdsA family.

Its subcellular location is the cytoplasm. The enzyme catalyses D-arabinose 5-phosphate + phosphoenolpyruvate + H2O = 3-deoxy-alpha-D-manno-2-octulosonate-8-phosphate + phosphate. It functions in the pathway carbohydrate biosynthesis; 3-deoxy-D-manno-octulosonate biosynthesis; 3-deoxy-D-manno-octulosonate from D-ribulose 5-phosphate: step 2/3. It participates in bacterial outer membrane biogenesis; lipopolysaccharide biosynthesis. The polypeptide is 2-dehydro-3-deoxyphosphooctonate aldolase (Azotobacter vinelandii (strain DJ / ATCC BAA-1303)).